Here is a 520-residue protein sequence, read N- to C-terminus: GMP synthase [glutamine-hydrolyzing] (520 aa).

In terms of domain architecture, Glutamine amidotransferase type-1 spans 9–202; it reads TILIIDFGSQ…VHRIVGVKPG (194 aa). The active-site Nucleophile is Cys-86. Residues His-176 and Glu-178 contribute to the active site. The GMPS ATP-PPase domain maps to 203–395; the sequence is WTMGAYREQA…LGLPDSFIGR (193 aa). Position 230–236 (230–236) interacts with ATP; it reads SGGVDSS.

In terms of assembly, homodimer.

It carries out the reaction XMP + L-glutamine + ATP + H2O = GMP + L-glutamate + AMP + diphosphate + 2 H(+). It participates in purine metabolism; GMP biosynthesis; GMP from XMP (L-Gln route): step 1/1. Functionally, catalyzes the synthesis of GMP from XMP. This Brucella melitensis biotype 2 (strain ATCC 23457) protein is GMP synthase [glutamine-hydrolyzing].